Consider the following 416-residue polypeptide: E3 ubiquitin-protein ligase RNFT1 (416 aa).

A compositionally biased stretch (polar residues) spans 27–45 (QSSSGHTHHQPGSNDSPSV). Disordered stretches follow at residues 27–50 (QSSS…MSLP) and 63–116 (GDVT…ADSR). Positions 77–86 (GARSSSRRVR) are enriched in basic residues. The next 6 membrane-spanning stretches (helical) occupy residues 146 to 166 (LVVQ…TFLY), 184 to 204 (LQCL…YYTF), 214 to 234 (VFMN…VVGI), 237 to 257 (FIGK…PSFV), 265 to 287 (YWYM…PVWF), and 302 to 322 (WHFG…IIFG). Residues 349-400 (CSEVDGMCAICQAEFIKPIVLVCQHVFCEECISLWFNKEKTCPLCRTVISNQ) form a required for ubiquitin ligase activity and for protection against ER stress-induced cell death region. An RING-type zinc finger spans residues 356–394 (CAICQAEFIKPIVLVCQHVFCEECISLWFNKEKTCPLCR).

The protein localises to the endoplasmic reticulum membrane. The enzyme catalyses S-ubiquitinyl-[E2 ubiquitin-conjugating enzyme]-L-cysteine + [acceptor protein]-L-lysine = [E2 ubiquitin-conjugating enzyme]-L-cysteine + N(6)-ubiquitinyl-[acceptor protein]-L-lysine.. The protein operates within protein modification; protein ubiquitination. Functionally, E3 ubiquitin-protein ligase that acts in the endoplasmic reticulum (ER)-associated degradation (ERAD) pathway, which targets misfolded proteins that accumulate in the endoplasmic reticulum (ER) for ubiquitination and subsequent proteasome-mediated degradation. Protects cells from ER stress-induced apoptosis. This Xenopus tropicalis (Western clawed frog) protein is E3 ubiquitin-protein ligase RNFT1 (rnft1).